A 204-amino-acid polypeptide reads, in one-letter code: Somatotropin (204 aa).

The first 17 residues, M1–S17, serve as a signal peptide directing secretion. At Q18 the chain carries Pyrrolidone carboxylic acid. H36 contributes to the Zn(2+) binding site. An intrachain disulfide couples C69 to C177. Residue E186 coordinates Zn(2+). C194 and C202 are joined by a disulfide.

It belongs to the somatotropin/prolactin family.

The protein localises to the secreted. In terms of biological role, growth hormone plays an important role in growth control and is involved in the regulation of several anabolic processes. Implicated as an osmoregulatory substance important for seawater adaptation. The sequence is that of Somatotropin (gh) from Sciaenops ocellatus (Red drum).